The following is a 213-amino-acid chain: Vacuolar ATPase assembly integral membrane protein vph2 (213 aa).

The next 2 helical transmembrane spans lie at 113-133 (ISAI…VWYC) and 142-162 (KIAL…FLYV).

The protein resides in the endoplasmic reticulum membrane. Its function is as follows. Required for vacuolar ATPase assembly. The sequence is that of Vacuolar ATPase assembly integral membrane protein vph2 (vph2) from Schizosaccharomyces pombe (strain 972 / ATCC 24843) (Fission yeast).